Reading from the N-terminus, the 482-residue chain is Probable cytosol aminopeptidase (482 aa).

Mn(2+) is bound by residues Lys-251 and Asp-256. Lys-263 is an active-site residue. Mn(2+)-binding residues include Asp-274, Asp-333, and Glu-335. Residue Arg-337 is part of the active site.

The protein belongs to the peptidase M17 family. It depends on Mn(2+) as a cofactor.

It is found in the cytoplasm. It carries out the reaction Release of an N-terminal amino acid, Xaa-|-Yaa-, in which Xaa is preferably Leu, but may be other amino acids including Pro although not Arg or Lys, and Yaa may be Pro. Amino acid amides and methyl esters are also readily hydrolyzed, but rates on arylamides are exceedingly low.. The enzyme catalyses Release of an N-terminal amino acid, preferentially leucine, but not glutamic or aspartic acids.. Its function is as follows. Presumably involved in the processing and regular turnover of intracellular proteins. Catalyzes the removal of unsubstituted N-terminal amino acids from various peptides. The chain is Probable cytosol aminopeptidase from Acinetobacter baylyi (strain ATCC 33305 / BD413 / ADP1).